Here is a 130-residue protein sequence, read N- to C-terminus: Small ribosomal subunit protein uS8 (130 aa).

The protein belongs to the universal ribosomal protein uS8 family. In terms of assembly, part of the 30S ribosomal subunit. Contacts proteins S5 and S12.

Functionally, one of the primary rRNA binding proteins, it binds directly to 16S rRNA central domain where it helps coordinate assembly of the platform of the 30S subunit. The polypeptide is Small ribosomal subunit protein uS8 (Shewanella baltica (strain OS223)).